Here is a 361-residue protein sequence, read N- to C-terminus: DNA double-strand break repair protein Mre11 (361 aa).

Mn(2+) contacts are provided by Asp-7, His-9, Asp-48, and Asn-83. Catalysis depends on His-84, which acts as the Proton donor. Mn(2+) is bound by residues His-176, His-204, and His-206.

The protein belongs to the MRE11/RAD32 family. In terms of assembly, homodimer. Forms a heterotetramer composed of two Mre11 subunits and two Rad50 subunits. It depends on Mn(2+) as a cofactor.

Its activity is regulated as follows. Nuclease activity is regulated by Rad50. Part of the Rad50/Mre11 complex, which is involved in the early steps of DNA double-strand break (DSB) repair. The complex may facilitate opening of the processed DNA ends to aid in the recruitment of HerA and NurA. Mre11 binds to DSB ends and has both double-stranded 3'-5' exonuclease activity and single-stranded endonuclease activity. This is DNA double-strand break repair protein Mre11 from Nanoarchaeum equitans (strain Kin4-M).